The following is a 137-amino-acid chain: MMQPKKTKFRKAHKGRIHGTASSGATLAFGQFGLKAMAPERISARQIEAARRALTRHMKRAGRVWIRVFPDVPVSKKPAEVRMGSGKGAPELWVVRVKPGRVLFEIDGVGAQTAKEALTLAAAKLPIKTRFVARIAE.

The protein belongs to the universal ribosomal protein uL16 family. As to quaternary structure, part of the 50S ribosomal subunit.

Binds 23S rRNA and is also seen to make contacts with the A and possibly P site tRNAs. This chain is Large ribosomal subunit protein uL16, found in Nitrobacter hamburgensis (strain DSM 10229 / NCIMB 13809 / X14).